The chain runs to 580 residues: Small conductance calcium-activated potassium channel protein 2 (580 aa).

Disordered regions lie at residues 1–68 and 88–116; these read MSSC…VSKP and GGGGGGGGGGGGSGHGSSSGTKSSKKKNQ. Residues 48–61 are compositionally biased toward low complexity; the sequence is SSPSAAAAASSSAP. The segment covering 88–104 has biased composition (gly residues); sequence GGGGGGGGGGGGSGHGS. Residues 140-160 traverse the membrane as a helical segment; sequence LIFGMFGIVVMVIETELSWGA. Y161 carries the post-translational modification Phosphotyrosine. A helical membrane pass occupies residues 169–189; it reads LALKCLISLSTIILLGLIIVY. The helical transmembrane segment at 215–235 threads the bilayer; it reads IFFICLEILVCAIHPIPGNYT. Residues 257 to 277 form a helical membrane-spanning segment; that stretch reads IILSIPMFLRLYLIARVMLLH. A helical transmembrane segment spans residues 306-326; the sequence is LMTICPGTVLLVFSISLWIIA. Residues 346–366 constitute an intramembrane region (pore-forming); that stretch reads FLGAMWLISITFLSIGYGDMV. Residues 375–395 form a helical membrane-spanning segment; sequence VCLLTGIMGAGCTALVVAVVA. The segment at 413–489 is calmodulin-binding; sequence DTQLTKRVKN…LVDLAKTQNI (77 aa). A compositionally biased stretch (basic and acidic residues) spans 551–560; it reads HVTYNAERSR. Positions 551–580 are disordered; it reads HVTYNAERSRSSSRRRRSSSTAPPTSSESS. Positions 569–580 are enriched in low complexity; it reads SSTAPPTSSESS.

This sequence belongs to the potassium channel KCNN family. KCa2.2/KCNN2 subfamily. As to quaternary structure, homodimer. Heteromultimer with KCNN1 and KCNN3. The complex is composed of 4 channel subunits each of which binds to a calmodulin subunit which regulates the channel activity through calcium-binding. Interacts (via N-terminal domain) with MPP2. Brain.

Its subcellular location is the membrane. It localises to the cytoplasm. The protein resides in the myofibril. The protein localises to the sarcomere. It is found in the z line. The catalysed reaction is K(+)(in) = K(+)(out). Inhibited by bee venom neurotoxin apamin. Inhibited by UCL 1684 and tetraethylammonium (TEA). Functionally, small conductance calcium-activated potassium channel that mediates the voltage-independent transmembrane transfer of potassium across the cell membrane through a constitutive interaction with calmodulin which binds the intracellular calcium allowing its opening. The current is characterized by a voltage-independent activation, an intracellular calcium concentration increase-dependent activation and a single-channel conductance of about 3 picosiemens. Also presents an inwardly rectifying current, thus reducing its already small outward conductance of potassium ions, which is particularly the case when the membrane potential displays positive values, above + 20 mV. The inward rectification could be due to a blockade of the outward current by intracellular divalent cations such as calcium and magnesium and could also be due to an intrinsic property of the channel pore, independent of intracellular divalent ions. There are three positively charged amino acids in the S6 transmembrane domain, close to the pore, that collectively control the conductance and rectification through an electrostatic mechanism. Additionally, electrostatic contributions from these residues also play an important role in determining the intrinsic open probability of the channel in the absence of calcium, affecting the apparent calcium affinity for activation. Forms an heteromeric complex with calmodulin, which is constitutively associated in a calcium-independent manner. Channel opening is triggered when calcium binds the calmodulin resulting in a rotary movement leading to the formation of the dimeric complex to open the gate. Plays a role in the repolarization phase of cardiac action potential. In Rattus norvegicus (Rat), this protein is Small conductance calcium-activated potassium channel protein 2.